We begin with the raw amino-acid sequence, 550 residues long: Solute carrier family 22 member 11 (550 aa).

The Cytoplasmic portion of the chain corresponds to 1–10 (MAFSKLLEQA). The chain crosses the membrane as a helical span at residues 11 to 31 (GGVGLFQTLQVLTFILPCLMI). Residues 32 to 142 (PSQMLLENFS…DLVCSSQGLK (111 aa)) are Extracellular-facing. N-linked (GlcNAc...) asparagine glycosylation is found at Asn-39, Asn-56, and Asn-99. A helical transmembrane segment spans residues 143–163 (PLSQSIFMSGILVGSFIWGLL). At 164-174 (SYRFGRKPMLS) the chain is on the cytoplasmic side. Residues 175–195 (WCCLQLAVAGTSTIFAPTFVI) form a helical membrane-spanning segment. Residues 196 to 200 (YCGLR) are Extracellular-facing. The chain crosses the membrane as a helical span at residues 201–221 (FVAAFGMAGIFLSSLTLMVEW). Over 222-231 (TTTSRRAVTM) the chain is Cytoplasmic. Residues 232-252 (TVVGCAFSAGQAALGGLAFAL) traverse the membrane as a helical segment. At 253-256 (RDWR) the chain is on the extracellular side. Residues 257 to 277 (TLQLAASVPFFAISLISWWLP) traverse the membrane as a helical segment. Residues 278-346 (ESARWLIIKG…FCVPVLRWRS (69 aa)) are Cytoplasmic-facing. Residues 347-367 (CAMLVVNFSLLISYYGLVFDL) form a helical membrane-spanning segment. The Extracellular segment spans residues 368 to 378 (QSLGRDIFLLQ). Residues 379-399 (ALFGAVDFLGRATTALLLSFL) form a helical membrane-spanning segment. Residues 400–402 (GRR) lie on the Cytoplasmic side of the membrane. The chain crosses the membrane as a helical span at residues 403 to 423 (TIQAGSQAMAGLAILANMLVP). Residues 424 to 430 (QDLQTLR) are Extracellular-facing. A helical transmembrane segment spans residues 431-451 (VVFAVLGKGCFGISLTCLTIY). Residues 452–463 (KAELFPTPVRMT) lie on the Cytoplasmic side of the membrane. A helical membrane pass occupies residues 464–484 (ADGILHTVGRLGAMMGPLILM). At 485–490 (SRQALP) the chain is on the extracellular side. A helical transmembrane segment spans residues 491 to 511 (LLPPLLYGVISIASSLVVLFF). Over 512–550 (LPETQGLPLPDTIQDLESQKSTAAQGNRQEAVTVESTSL) the chain is Cytoplasmic. The disordered stretch occupies residues 531–550 (KSTAAQGNRQEAVTVESTSL).

It belongs to the major facilitator (TC 2.A.1) superfamily. Organic cation transporter (TC 2.A.1.19) family. Post-translationally, N-glycosylated. Contains several complex-type N-glycans. In terms of tissue distribution, expressed in placental trophoblasts, syncytiotrophoblast and cytotrophoblast. Also located in the proximal tubules in kidneys.

The protein resides in the cell membrane. It localises to the apical cell membrane. Its subcellular location is the basal cell membrane. It catalyses the reaction estrone 3-sulfate(out) + glutarate(in) = estrone 3-sulfate(in) + glutarate(out). The catalysed reaction is dehydroepiandrosterone 3-sulfate(out) = dehydroepiandrosterone 3-sulfate(in). It carries out the reaction prostaglandin F2alpha(out) = prostaglandin F2alpha(in). The enzyme catalyses prostaglandin E2(out) = prostaglandin E2(in). Antiporter that mediates the transport of conjugated steroids and other specific organic anions at the basal membrane of syncytiotrophoblast and at the apical membrane of proximal tubule epithelial cells, in exchange for anionic compounds. May be responsible for placental absorption of fetal-derived steroid sulfates such as estrone sulfate (E1S) and the steroid hormone precursor dehydroepiandrosterone sulfate (DHEA-S), as well as clearing waste products and xenobiotics from the fetus. Maybe also be involved in placental urate homeostasis. Facilitates the renal reabsorption of organic anions such as urate and derived steroid sulfates. Organic anion glutarate acts as conteranion for E1S renal uptake. Possible transport mode may also include DHEA-S/E1S exchange. Also interacts with inorganic anions such as chloride and hydroxyl ions, therefore possible transport modes may include E1S/Cl(-), E1S/OH(-), urate/Cl(-) and urate/OH(-). Also mediates the transport of prostaglandin E2 (PGE2) and prostaglandin F2-alpha (PGF2-alpha) and may be involved in their renal excretion. Also able to uptake anionic drugs, diuretics, bile salts and ochratoxin A. Mediates the unidirectional efflux of glutamate and aspartate. Glutamate efflux down its transmembrane gradient may drive SLC22A11/OAT4-mediated placental uptake of E1S. The sequence is that of Solute carrier family 22 member 11 from Homo sapiens (Human).